The sequence spans 254 residues: Gamma-glutamyl-gamma-aminobutyrate hydrolase PuuD (254 aa).

A Glutamine amidotransferase type-1 domain is found at 16–250 (RNRLKGHATQ…ITACQHHIAE (235 aa)). Cys114 functions as the Nucleophile in the catalytic mechanism. Residues His222 and Glu224 contribute to the active site.

This sequence belongs to the peptidase C26 family. In terms of assembly, homodimer.

The catalysed reaction is 4-(gamma-L-glutamylamino)butanoate + H2O = 4-aminobutanoate + L-glutamate. It functions in the pathway amine and polyamine degradation; putrescine degradation; 4-aminobutanoate from putrescine: step 4/4. Functionally, involved in the breakdown of putrescine via hydrolysis of the gamma-glutamyl linkage of gamma-glutamyl-gamma-aminobutyrate. The protein is Gamma-glutamyl-gamma-aminobutyrate hydrolase PuuD (puuD) of Escherichia coli (strain K12).